The primary structure comprises 139 residues: Trafficking protein particle complex subunit 2-like protein (139 aa).

Belongs to the TRAPP small subunits family. Sedlin subfamily. As to quaternary structure, component of the multisubunit TRAPP (transport protein particle) complex, which includes at least TRAPPC2, TRAPPC2L, TRAPPC3, TRAPPC3L, TRAPPC4, TRAPPC5, TRAPPC8, TRAPPC9, TRAPPC10, TRAPPC11 and TRAPPC12. Interacts with the heterodimer TRAPPC3-TRAPPC6A.

The protein resides in the cytoplasm. It localises to the perinuclear region. The protein localises to the endoplasmic reticulum. It is found in the golgi apparatus. May play a role in vesicular transport from endoplasmic reticulum to Golgi. The polypeptide is Trafficking protein particle complex subunit 2-like protein (TRAPPC2L) (Bos taurus (Bovine)).